The sequence spans 154 residues: Ribosomal RNA large subunit methyltransferase H (154 aa).

S-adenosyl-L-methionine contacts are provided by residues Gly103 and 122–127 (FSKLTF).

Belongs to the RNA methyltransferase RlmH family. In terms of assembly, homodimer.

It is found in the cytoplasm. It catalyses the reaction pseudouridine(1915) in 23S rRNA + S-adenosyl-L-methionine = N(3)-methylpseudouridine(1915) in 23S rRNA + S-adenosyl-L-homocysteine + H(+). Its function is as follows. Specifically methylates the pseudouridine at position 1915 (m3Psi1915) in 23S rRNA. The polypeptide is Ribosomal RNA large subunit methyltransferase H (Caldicellulosiruptor saccharolyticus (strain ATCC 43494 / DSM 8903 / Tp8T 6331)).